Consider the following 288-residue polypeptide: Transmembrane and coiled-coil domain-containing protein 5A (288 aa).

Residues 10–189 are a coiled coil; that stretch reads KKNIISLNMD…ELETGYLERE (180 aa). Residues 227–249 form a helical membrane-spanning segment; sequence SLLFSTLFFIRLLGYLIFHLSFI.

This sequence belongs to the TMCO5 family. As to expression, only detected in testis (at protein level).

The protein resides in the endoplasmic reticulum membrane. The protein localises to the nucleus membrane. The chain is Transmembrane and coiled-coil domain-containing protein 5A (Tmco5a) from Mus musculus (Mouse).